The primary structure comprises 575 residues: Sulfite reductase [NADPH] hemoprotein beta-component (575 aa).

Cys-438, Cys-444, Cys-484, and Cys-488 together coordinate [4Fe-4S] cluster. Cys-488 is a binding site for siroheme.

This sequence belongs to the nitrite and sulfite reductase 4Fe-4S domain family. As to quaternary structure, alpha(8)-beta(8). The alpha component is a flavoprotein, the beta component is a hemoprotein. Siroheme is required as a cofactor. [4Fe-4S] cluster serves as cofactor.

It catalyses the reaction hydrogen sulfide + 3 NADP(+) + 3 H2O = sulfite + 3 NADPH + 4 H(+). The protein operates within sulfur metabolism; hydrogen sulfide biosynthesis; hydrogen sulfide from sulfite (NADPH route): step 1/1. Its function is as follows. Component of the sulfite reductase complex that catalyzes the 6-electron reduction of sulfite to sulfide. This is one of several activities required for the biosynthesis of L-cysteine from sulfate. This is Sulfite reductase [NADPH] hemoprotein beta-component from Vibrio atlanticus (strain LGP32) (Vibrio splendidus (strain Mel32)).